The primary structure comprises 446 residues: tRNA-2-methylthio-N(6)-dimethylallyladenosine synthase (446 aa).

The MTTase N-terminal domain occupies 3–120 (KKLFIETHGC…LPEMIDAARS (118 aa)). The [4Fe-4S] cluster site is built by Cys12, Cys49, Cys83, Cys157, Cys161, and Cys164. The region spanning 143 to 375 (RVDGPTAFVS…QGRIHQQGYE (233 aa)) is the Radical SAM core domain. In terms of domain architecture, TRAM spans 378–442 (RRMVGSTQRI…PHSLRGTLIE (65 aa)).

Belongs to the methylthiotransferase family. MiaB subfamily. Monomer. [4Fe-4S] cluster serves as cofactor.

It is found in the cytoplasm. The catalysed reaction is N(6)-dimethylallyladenosine(37) in tRNA + (sulfur carrier)-SH + AH2 + 2 S-adenosyl-L-methionine = 2-methylsulfanyl-N(6)-dimethylallyladenosine(37) in tRNA + (sulfur carrier)-H + 5'-deoxyadenosine + L-methionine + A + S-adenosyl-L-homocysteine + 2 H(+). Its function is as follows. Catalyzes the methylthiolation of N6-(dimethylallyl)adenosine (i(6)A), leading to the formation of 2-methylthio-N6-(dimethylallyl)adenosine (ms(2)i(6)A) at position 37 in tRNAs that read codons beginning with uridine. In Pseudomonas paraeruginosa (strain DSM 24068 / PA7) (Pseudomonas aeruginosa (strain PA7)), this protein is tRNA-2-methylthio-N(6)-dimethylallyladenosine synthase.